An 89-amino-acid polypeptide reads, in one-letter code: Small ribosomal subunit protein uS15 (89 aa).

Belongs to the universal ribosomal protein uS15 family. In terms of assembly, part of the 30S ribosomal subunit. Forms a bridge to the 50S subunit in the 70S ribosome, contacting the 23S rRNA.

One of the primary rRNA binding proteins, it binds directly to 16S rRNA where it helps nucleate assembly of the platform of the 30S subunit by binding and bridging several RNA helices of the 16S rRNA. Its function is as follows. Forms an intersubunit bridge (bridge B4) with the 23S rRNA of the 50S subunit in the ribosome. The chain is Small ribosomal subunit protein uS15 from Bifidobacterium longum subsp. infantis (strain ATCC 15697 / DSM 20088 / JCM 1222 / NCTC 11817 / S12).